The sequence spans 830 residues: G-type lectin S-receptor-like serine/threonine-protein kinase SD1-13 (830 aa).

The N-terminal stretch at 1-21 is a signal peptide; that stretch reads MGCLLILLLTLICFSLRLCLA. Positions 22–145 constitute a Bulb-type lectin domain; it reads TDVITFSSEF…TNTGDEILWE (124 aa). Over 22–434 the chain is Extracellular; the sequence is TDVITFSSEF…SEFKKRTNRS (413 aa). N40, N53, and N82 each carry an N-linked (GlcNAc...) asparagine glycan. Residues 283 to 321 enclose the EGF-like; atypical domain; that stretch reads PSTKCDTYATCGQFASCRFNPGSTPPCMCIRGFKPQSYA. 2 cysteine pairs are disulfide-bonded: C287–C299 and C293–C309. 3 N-linked (GlcNAc...) asparagine glycosylation sites follow: N327, N384, and N432. The region spanning 340 to 423 is the PAN domain; it reads CESRDNNDGS…TGVVFYIRLA (84 aa). Cystine bridges form between C377–C398 and C381–C387. A helical membrane pass occupies residues 435–455; that stretch reads IVITVTLLVGAFLFAGTVVLA. At 456–830 the chain is on the cytoplasmic side; the sequence is LWKIAKHREK…NVSLTKITGR (375 aa). The Protein kinase domain maps to 512 to 798; it reads FSITNKLGQG…NLPEPKQPAF (287 aa). Residues 518-526 and K540 each bind ATP; that span reads LGQGGFGAV. T545 carries the post-translational modification Phosphothreonine. Phosphoserine is present on residues S546 and S561. The segment at 601–618 is caM-binding; it reads VKQRLLDWKTRFNIIDGI. Catalysis depends on D637, which acts as the Proton acceptor. 3 positions are modified to phosphoserine: S641, S654, and S670. Residue T671 is modified to Phosphothreonine. Phosphoserine is present on residues S714, S715, S726, S805, S809, S810, S813, S818, and S823. The disordered stretch occupies residues 789–830; the sequence is NLPEPKQPAFIPRRGTSEVESSGQSDPRASINNVSLTKITGR. Residues 806–830 show a composition bias toward polar residues; that stretch reads EVESSGQSDPRASINNVSLTKITGR. Residues T825 and T828 each carry the phosphothreonine modification.

Belongs to the protein kinase superfamily. Ser/Thr protein kinase family. Interacts with PUB9, PUB13 and PUB14. Binds to calmodulin (CaM) in a Ca(2+)-dependent manner. Autophosphorylated. As to expression, mostly expressed in rosette leaves, and, to a lower extent, in cauline leaves and stems.

It localises to the cell membrane. It carries out the reaction L-seryl-[protein] + ATP = O-phospho-L-seryl-[protein] + ADP + H(+). The catalysed reaction is L-threonyl-[protein] + ATP = O-phospho-L-threonyl-[protein] + ADP + H(+). In terms of biological role, receptor-like serine/threonine-protein kinase that represses the disease resistance signaling pathway triggered in response to bacterial pathogen such as Pseudomonas syringae pv. tomato. This Arabidopsis thaliana (Mouse-ear cress) protein is G-type lectin S-receptor-like serine/threonine-protein kinase SD1-13 (SD113).